The chain runs to 248 residues: Small ribosomal subunit protein uS2 (248 aa).

It belongs to the universal ribosomal protein uS2 family.

This chain is Small ribosomal subunit protein uS2, found in Herminiimonas arsenicoxydans.